We begin with the raw amino-acid sequence, 428 residues long: Enolase (428 aa).

(2R)-2-phosphoglycerate is bound at residue Gln163. Glu205 functions as the Proton donor in the catalytic mechanism. Asp242, Glu285, and Asp312 together coordinate Mg(2+). (2R)-2-phosphoglycerate-binding residues include Lys337, Arg366, Ser367, and Lys388. Lys337 serves as the catalytic Proton acceptor.

It belongs to the enolase family. Mg(2+) serves as cofactor.

It is found in the cytoplasm. It localises to the secreted. The protein resides in the cell surface. It carries out the reaction (2R)-2-phosphoglycerate = phosphoenolpyruvate + H2O. It functions in the pathway carbohydrate degradation; glycolysis; pyruvate from D-glyceraldehyde 3-phosphate: step 4/5. Functionally, catalyzes the reversible conversion of 2-phosphoglycerate (2-PG) into phosphoenolpyruvate (PEP). It is essential for the degradation of carbohydrates via glycolysis. This chain is Enolase, found in Neisseria meningitidis serogroup C (strain 053442).